The sequence spans 142 residues: Ribosome maturation factor RimP (142 aa).

The protein belongs to the RimP family.

The protein localises to the cytoplasm. Required for maturation of 30S ribosomal subunits. In Aromatoleum aromaticum (strain DSM 19018 / LMG 30748 / EbN1) (Azoarcus sp. (strain EbN1)), this protein is Ribosome maturation factor RimP.